A 284-amino-acid polypeptide reads, in one-letter code: N-methyltransferase sirN (284 aa).

Belongs to the methyltransferase superfamily. LaeA methyltransferase family.

It participates in mycotoxin biosynthesis. Functionally, N-methyltransferase; part of the gene cluster that mediates the biosynthesis of sirodesmin PL, an epipolythiodioxopiperazine (ETP) characterized by a disulfide bridged cyclic dipeptide and that acts as a phytotoxin which is involved in the blackleg didease of canola. SirD catalyzes the O-prenylation of L-tyrosine (L-Tyr) in the presence of dimethylallyl diphosphate (DMAPP) to yield 4-O-dimethylallyl-L-Tyr, and therefore represents probably the first pathway-specific enzyme in the biosynthesis of sirodesmin PL. 4-O-dimethylallyl-L-Tyr, then undergoes condensation with L-Ser in a reaction catalyzed by the non-ribosomal peptide synthase sirP to form the diketopiperazine (DKP) backbone. Further bishydroxylation of the DKP performed by the cytochrome P450 monooxygenase sirC leads to the production of the intermediate phomamide. This step is essential to form the reactive thiol group required for toxicity of sirodesmin PL. The next steps of sirodesmin biosynthesis are not well understood yet but some predictions could be made from intermediate compounds identification. Phomamide is converted into phomalizarine via oxidation, probably by sirT. Further oxidation, methylation (by sirM or sirN) and reduction steps convert phomalizarine to deacetyl sirodesmin. Finally, acetyltransferase sirH probably acetylates deacetyl sirodesmin to produce sirodesmin PL. This chain is N-methyltransferase sirN, found in Leptosphaeria maculans (Blackleg fungus).